A 264-amino-acid polypeptide reads, in one-letter code: 5'-nucleotidase SurE (264 aa).

Asp10, Asp11, Ser43, and Asn99 together coordinate a divalent metal cation.

The protein belongs to the SurE nucleotidase family. A divalent metal cation is required as a cofactor.

The protein resides in the cytoplasm. The enzyme catalyses a ribonucleoside 5'-phosphate + H2O = a ribonucleoside + phosphate. In terms of biological role, nucleotidase that shows phosphatase activity on nucleoside 5'-monophosphates. This Methanococcus maripaludis (strain C6 / ATCC BAA-1332) protein is 5'-nucleotidase SurE.